We begin with the raw amino-acid sequence, 146 residues long: Basic phospholipase A2 beta-bungarotoxin A2 chain (146 aa).

The first 19 residues, 1–19 (MNPAHLLVLSAVCVSLLGA), serve as a signal peptide directing secretion. Positions 20–27 (SNIPPQSL) are excised as a propeptide. Intrachain disulfides connect C54–C145, C56–C72, C71–C126, C78–C119, C87–C112, and C105–C117. 3 residues coordinate Ca(2+): Y55, G57, and G59. Residue H75 is part of the active site. D76 contacts Ca(2+). D120 is a catalytic residue.

It belongs to the phospholipase A2 family. Group I subfamily. D49 sub-subfamily. As to quaternary structure, heterodimer; disulfide-linked. The A chain has phospholipase A2 activity and the B chain shows homology with the basic protease inhibitors. Ca(2+) serves as cofactor. As to expression, expressed by the venom gland.

Its subcellular location is the secreted. It carries out the reaction a 1,2-diacyl-sn-glycero-3-phosphocholine + H2O = a 1-acyl-sn-glycero-3-phosphocholine + a fatty acid + H(+). Functionally, snake venom phospholipase A2 (PLA2) that inhibits neuromuscular transmission by blocking acetylcholine release from the nerve termini. PLA2 catalyzes the calcium-dependent hydrolysis of the 2-acyl groups in 3-sn-phosphoglycerides. The sequence is that of Basic phospholipase A2 beta-bungarotoxin A2 chain from Bungarus flaviceps flaviceps (Red-headed krait).